Consider the following 367-residue polypeptide: MNLADKVLVVNDNLPIRTDKPVHSGKVRSVYWLTPEDSARLIKDKGYDVPADAPLAIMVISDRISAFDCVWQGENGLNGVPGKGTALNAISNHWFKLFKEKGLADSHILDIPHPLVWIVQKARPVMIEAIARQYITGSMWRSYTKGEREFCGITIPEGLEKDQKLPELLITPSTKGVLTGLEGVPEADDVNVSRSDIERHVDGFNFSSLSDIDLYEKLLKEGFDVISDALAEHDQIFVDTKFEFGYVNDAAGNEKLIYMDEVGTPDSSRIWDGSSHRDGKIIEQSKEGFRQWLLNHFPDADILLNKNRMEERFALAKDNKLPESVMMDISNTYVGIAEKVIGEKLHISENPKQEIIDILRSEYQLIV.

It belongs to the SAICAR synthetase family.

It carries out the reaction 5-amino-1-(5-phospho-D-ribosyl)imidazole-4-carboxylate + L-aspartate + ATP = (2S)-2-[5-amino-1-(5-phospho-beta-D-ribosyl)imidazole-4-carboxamido]succinate + ADP + phosphate + 2 H(+). The protein operates within purine metabolism; IMP biosynthesis via de novo pathway; 5-amino-1-(5-phospho-D-ribosyl)imidazole-4-carboxamide from 5-amino-1-(5-phospho-D-ribosyl)imidazole-4-carboxylate: step 1/2. In Shewanella piezotolerans (strain WP3 / JCM 13877), this protein is Phosphoribosylaminoimidazole-succinocarboxamide synthase.